The chain runs to 612 residues: Coagulation factor XII (612 aa).

An N-terminal signal peptide occupies residues 1-19 (MRALLLLGALLVSLESTVS). The Fibronectin type-II domain maps to 42 to 90 (VTGEPCHFPFQYHRQLHHKCIHRGRPGPRPWCATTPNFEKDQRWAYCLE). 20 cysteine pairs are disulfide-bonded: Cys47/Cys73, Cys61/Cys88, Cys98/Cys110, Cys104/Cys119, Cys121/Cys130, Cys135/Cys163, Cys161/Cys170, Cys178/Cys189, Cys183/Cys198, Cys200/Cys209, Cys217/Cys306, Cys240/Cys288, Cys268/Cys301, Cys355/Cys482, Cys393/Cys409, Cys401/Cys471, Cys432/Cys435, Cys498/Cys566, Cys529/Cys545, and Cys556/Cys587. Positions 94–131 (VKDHCSKHNPCQKGGTCVNMPDGPRCICADHFTGKHCQ) constitute an EGF-like 1 domain. O-linked (Fuc) threonine glycosylation occurs at Thr109. In terms of domain architecture, Fibronectin type-I spans 133–173 (EKCFEPQFFRFFHENEIWHRLEPAGVVKCQCKGPNAQCKPL). One can recognise an EGF-like 2 domain in the interval 174–210 (ASQVCRTNPCLNGGSCLQAEGHRLCRCAPSFAGRLCD). One can recognise a Kringle domain in the interval 217–306 (CYDDRDRGLS…SWNYCRLAPC (90 aa)). Residues Asn251 and Asn282 are each glycosylated (N-linked (GlcNAc...) asparagine). One can recognise a Peptidase S1 domain in the interval 369–611 (VVGGLVALPG…YLAWIREHTA (243 aa)). His408 (charge relay system) is an active-site residue. Asn429 carries N-linked (GlcNAc...) asparagine glycosylation. Asp457 acts as the Charge relay system in catalysis. Ser560 serves as the catalytic Charge relay system.

This sequence belongs to the peptidase S1 family. In terms of assembly, interacts with HRG; the interaction, which is enhanced in the presence of zinc ions and inhibited by heparin-binding, inhibits factor XII autoactivation and contact-initiated coagulation. Post-translationally, O- and N-glycosylated.

The protein localises to the secreted. It catalyses the reaction Selective cleavage of Arg-|-Ile bonds in factor VII to form factor VIIa and factor XI to form factor XIa.. Activity is promoted in the presence of negatively charged surfaces. Its function is as follows. Factor XII is a serum glycoprotein that participates in the initiation of blood coagulation, fibrinolysis, and the generation of bradykinin and angiotensin. Prekallikrein is cleaved by factor XII to form kallikrein, which then cleaves factor XII first to alpha-factor XIIa and then to beta-factor XIIa. Alpha-factor XIIa activates factor XI to factor XIa. The protein is Coagulation factor XII (F12) of Bos taurus (Bovine).